The following is a 103-amino-acid chain: Co-chaperonin GroES (103 aa).

It belongs to the GroES chaperonin family. Heptamer of 7 subunits arranged in a ring. Interacts with the chaperonin GroEL.

It is found in the cytoplasm. Functionally, together with the chaperonin GroEL, plays an essential role in assisting protein folding. The GroEL-GroES system forms a nano-cage that allows encapsulation of the non-native substrate proteins and provides a physical environment optimized to promote and accelerate protein folding. GroES binds to the apical surface of the GroEL ring, thereby capping the opening of the GroEL channel. The protein is Co-chaperonin GroES of Synechocystis sp. (strain ATCC 27184 / PCC 6803 / Kazusa).